The sequence spans 151 residues: Putative phosphatidylglycerol/phosphatidylinositol transfer protein 1 (151 aa).

The signal sequence occupies residues 1–26 (MKHSKNQIVYITFFIIILIVVKPIES).

It belongs to the NPC2 family. In terms of assembly, monomer.

Functionally, catalyzes the intermembrane transfer of phosphatidylglycerol and phosphatidylinositol. This chain is Putative phosphatidylglycerol/phosphatidylinositol transfer protein 1, found in Dictyostelium discoideum (Social amoeba).